Here is a 207-residue protein sequence, read N- to C-terminus: B2 protein (207 aa).

The disordered stretch occupies residues 1 to 68 (MIDQEESNFN…FKTLPPAESL (68 aa)). Low complexity-rich tracts occupy residues 8-26 (NFNF…QFHG) and 35-52 (KNNN…GENK). The 133-residue stretch at 72–204 (ETVGGYIFVC…AISLLDIFEE (133 aa)) folds into the DCD domain.

The protein is B2 protein of Daucus carota (Wild carrot).